We begin with the raw amino-acid sequence, 592 residues long: Protein US23 (592 aa).

The tract at residues 407–491 (PRSLGDGEEE…NNVVPNVDRR (85 aa)) is disordered. Positions 460–481 (ADDEEQGEDDDDSGAEPMEPEE) are enriched in acidic residues.

This sequence belongs to the herpesviridae US22 family.

Its subcellular location is the virion tegument. In Homo sapiens (Human), this protein is Protein US23 (US23).